We begin with the raw amino-acid sequence, 556 residues long: Dihydroxy-acid dehydratase (556 aa).

Aspartate 81 contacts Mg(2+). [2Fe-2S] cluster is bound at residue cysteine 122. The Mg(2+) site is built by aspartate 123 and lysine 124. Lysine 124 is modified (N6-carboxylysine). Residue cysteine 196 coordinates [2Fe-2S] cluster. Glutamate 444 contacts Mg(2+). Serine 470 (proton acceptor) is an active-site residue.

This sequence belongs to the IlvD/Edd family. As to quaternary structure, homodimer. Requires [2Fe-2S] cluster as cofactor. Mg(2+) serves as cofactor.

The enzyme catalyses (2R)-2,3-dihydroxy-3-methylbutanoate = 3-methyl-2-oxobutanoate + H2O. The catalysed reaction is (2R,3R)-2,3-dihydroxy-3-methylpentanoate = (S)-3-methyl-2-oxopentanoate + H2O. It participates in amino-acid biosynthesis; L-isoleucine biosynthesis; L-isoleucine from 2-oxobutanoate: step 3/4. The protein operates within amino-acid biosynthesis; L-valine biosynthesis; L-valine from pyruvate: step 3/4. In terms of biological role, functions in the biosynthesis of branched-chain amino acids. Catalyzes the dehydration of (2R,3R)-2,3-dihydroxy-3-methylpentanoate (2,3-dihydroxy-3-methylvalerate) into 2-oxo-3-methylpentanoate (2-oxo-3-methylvalerate) and of (2R)-2,3-dihydroxy-3-methylbutanoate (2,3-dihydroxyisovalerate) into 2-oxo-3-methylbutanoate (2-oxoisovalerate), the penultimate precursor to L-isoleucine and L-valine, respectively. The polypeptide is Dihydroxy-acid dehydratase (Syntrophotalea carbinolica (strain DSM 2380 / NBRC 103641 / GraBd1) (Pelobacter carbinolicus)).